The following is a 1383-amino-acid chain: DNA-directed RNA polymerase subunit beta'' (1383 aa).

Zn(2+) contacts are provided by Cys-220, Cys-289, Cys-296, and Cys-299.

This sequence belongs to the RNA polymerase beta' chain family. RpoC2 subfamily. In terms of assembly, in plastids the minimal PEP RNA polymerase catalytic core is composed of four subunits: alpha, beta, beta', and beta''. When a (nuclear-encoded) sigma factor is associated with the core the holoenzyme is formed, which can initiate transcription. Requires Zn(2+) as cofactor.

The protein localises to the plastid. The protein resides in the chloroplast. The enzyme catalyses RNA(n) + a ribonucleoside 5'-triphosphate = RNA(n+1) + diphosphate. In terms of biological role, DNA-dependent RNA polymerase catalyzes the transcription of DNA into RNA using the four ribonucleoside triphosphates as substrates. This Oenothera parviflora (Small-flowered evening primrose) protein is DNA-directed RNA polymerase subunit beta''.